The primary structure comprises 48 residues: ATP synthase protein 8 (48 aa).

The helical transmembrane segment at 4–24 threads the bilayer; the sequence is LVPFFFVNQVVYAFVILTVLI.

This sequence belongs to the ATPase protein 8 family. As to quaternary structure, F-type ATPases have 2 components, CF(1) - the catalytic core - and CF(0) - the membrane proton channel.

The protein localises to the mitochondrion membrane. Its function is as follows. Mitochondrial membrane ATP synthase (F(1)F(0) ATP synthase or Complex V) produces ATP from ADP in the presence of a proton gradient across the membrane which is generated by electron transport complexes of the respiratory chain. F-type ATPases consist of two structural domains, F(1) - containing the extramembraneous catalytic core and F(0) - containing the membrane proton channel, linked together by a central stalk and a peripheral stalk. During catalysis, ATP synthesis in the catalytic domain of F(1) is coupled via a rotary mechanism of the central stalk subunits to proton translocation. Part of the complex F(0) domain. Minor subunit located with subunit a in the membrane. The sequence is that of ATP synthase protein 8 (atp8) from Aspergillus amstelodami.